The sequence spans 3063 residues: MATYMSTICFGSFECKLPYSPASCEHIVKEREVPASVDPFADLETQLSARLLKQKYATVRVLKNGTFTYRYKTDAQIMRIQKKLERKDREEYHFQMAAPSIVSKITIAGGDPPSKSEPQAPRGIIHTTPRMRKVKTRPIIKLTEGQMNHLIKQIKQIMSEKRGSVHLISKKTTHVQYKKILGAYSAAVRTAHMMGLRRRVDFRCDMWTVGLLQRLARTDKWSNQVRTINIRRGDSGVILNTKSLKGHFGRSSGGLFIVRGSHEGKLYDARSRVTQSILNSMIQFSNADNFWKGLDGNWARMRYPSDHTCVAGLPVEDCGRVAALMAHSILPCYKITCPTCAQQYASLPVSDLFKLLHKHARDGLNRLGADKDRFIHVNKFLIALEHLTEPVDLNLELFNEIFKSIGEKQQAPFKNLNVLNNFFLKGKENTAHEWQVAQLSLLELARFQKNRTDNIKKGDISFFRNKLSAKANWNLYLSCDNQLDKNANFLWGQREYHAKRFFSNFFEEIDPAKGYSAYEIRKHPSGTRKLSIGNLVVPLDLAEFRQKMKGDYRKQPGVSKKCTSSKDGNYVYPCCCTTLDDGSAIESTFYPPTKKHLVIGNSGDQKFVDLPKGDSEMLYIAKQGYCYINVFLAMLINISEEDAKDFTKKVRDMCVPKLGTWPTMMDLATTCAQMRIFYPDVHDAELPRILVDHDTQTCHVVDSFGSQTTGYHILKASSVSQLILFANDELESDIKHYRVGGVPNASPELGSTISPFREGGVIMSESAALKLLLKGIFRPKVMRQLLLDEPYLLILSILSPGILMAMYNNGIFELAVRLWINEKQSIAMIASLLSALALRVSAAETLVAQRIIIDAAATDLLDATCDGFNLHLTYPTALMVLQVVKNRNECDDTLFKAGFPSYNTSVVQIMEKNYLNLLNDAWKDLTWRENYPQHGTHTEQNALSTRYIKPTEKADLKGLYNISPQAFLGRSAQVVKGTASGLSERFNNYFNTKCVNISSFFIRRIFRRLPTFVTFVNSLLVISMLTSVVAVCQAIILDQRKYRREIELMQIEKNEIVCMELYASLQRKLERDFTWDEYIEYLKSVNPQIVQFAQAQMEEYDVRHQRSTPVVKNLEQVVAFMALVIMVFDAERSDCVFKTLNKFKGVLSSLDYEVRHQSLDDVIKNFDERNEIIDFELSEDTIRTSSVLDTKFSDWWDRQIQMGHTLPHYRTEGHFMEFTRATAVQVANDIAHSEHLDFLVRGAVGSGKSTGLPVHLSVAGSVLLIEPTRPLAENVFKQLSSEPFFKKPTLRMRGNSIFGSSPISVMTSGFALHYFANNRSQLAQFNFVIFDECHVLDPSAMAFRSLLSVYHQACKVLKVSATPVGREVEFTTQQPVKLIVEDTVSFQSFVDAQGSKTNADVVQFGSNVLVYVSSYNEVDTLAKLLTDKNMMVTKVDGRTMKHGCLEIVTKGTSARPHFVVATNIIENGVTLDIDVVVDFGLKVSPFLDIDNRSIAYNKVSVSYGERIQRLGRVGRFKKGVALRIGHTEKGIIEIPSMVATEAALACFAYNLPVMTGGVSTSLIGNCTVRQVKTMQQFELSPFFIQNFVAHDGSMHPVIHDILKKYKLRDCMTPLCDQSIPYRASSTWLSVSEYERLGVALEIPKQVKIAFHIKEIPPKLHEMLWETVVKYKDVCLFPSIRASSISKIAYTLRTDLFAIPRTLILVERLLEEERVKQSQFRSLIDEGCSSMFSIVNLTNTLRARYAKDYTAENIQKLEKVRSQLKEFSNLDGSACEENLIKRYESLQFVHHQAATSLAKDLKLKGIWNKSLVAKDLIIAGAVAIGGIGLIYSWFTQSVETVSHQGKNKSKRIQALKFRHARDKRAGFEIDNNDDTIEEFFGSAYRKKGKGKGTTVGMGKSSRRFINMYGFDPTEYSFIQFVDPLTGRQIEENVYADIRDIQERFSEVRKKMVENDDIEMQALGSNTTIHAYFRKDWCDKALKIDLMPHNPLKVCDKTNGIAKFPERELELRQTGPAVEVDVKDIPAQEVEHEAKSLMRGLRDFNPIAQTVCRLKVSVEYGASEMYGFGFGAYIVANHHLFRSYNGSMEVQSMHGTFRVKNLHSLSVLPIKGRDIILIKMPKDFPVFPQKLHFRAPTQNERICLVGTNFQEKYASSIITETSTTYNIPGSTFWKHWIETDNGHCGLPVVSTADGCIVGIHSLANNAHTTNYYSAFDEDFESKYLRTNEHNEWVKSWVYNPDTVLWGPLKLKDSTPKGLFKTTKLVQDLIDHDVVVEQAKHSAWMFEALTGNLQAVATMKSQLVTKHVVKGECRHFTEFLTVDAEAEAEAFFRPLMDAYGKSLLNRDAYIKDIMKYSKPIDVGVVDRMHLRKPSIGLSSTCNVHGFKKCAYVTDEQEIFKALNMKAAVGASYGCKKKDYFEHFTDADKEEIVMQSCLRLYKGLLGIWNGSLKAELRCKEKILANKTRTFTAAPLDTLLGGKVCVDDFNNQFYSKNIECCWTVGMTKFYGGWDKLLRRLPENWVYCDADGSQFDSSLTPYLINAVLTIRSTYMEDWDVGLQMLRNLYTEIVYTPISTPDGTIVKKFRGNNSGQPSTVVDNSLMVVLAMHYALIKECVEFEEIDSTCVFFVNGDDLLIAVNPEKESILDRMSQHFSDLGLNYDFSSRTRRKEELWFMSHRGLLIEGMYVPKLEEERIVSILQWDRADLPEHRLEAICAAMIESWGYSELTHQIRRFYSWLLQQQPFATIAQEGKAPYIASMALRKLYMDRAVDEEELRAFTEMMVALDDEFELDSYEVHHQANDTIDAGGSNKKDAKPEQGSIQPNPNKGKDKDVNAGTSGTHTVPRIKAITSKMRMPTSKGATVPNLEHLLEYAPQQIDISNTRATQSQFDTWYEAVRMAYDIGETEMPTVMNGLMVWCIENGTSPNVNGVWVMMDGNEQVEYPLKPIVENAKPTLRQIMAHFSDVAEAYIEMRNKKEPYMPRYGLIRNLRDMGLARYAFDFYEVTSRTPVRAREAHIQMKAAALKSAQPRLFGLDGGISTQEENTERHTTEDVSPSMHTLLGVKNM.

Positions 141–284 (KLTEGQMNHL…QSILNSMIQF (144 aa)) constitute a Peptidase S30 domain. Active-site for P1 proteinase activity residues include histidine 192, aspartate 201, and serine 235. Residues 334 to 337 (KITC) carry the Involved in interaction with stylet and aphid transmission motif. The short motif at 592–594 (PTK) is the Involved in virions binding and aphid transmission element. A Peptidase C6 domain is found at 618-740 (LYIAKQGYCY…ESDIKHYRVG (123 aa)). Residues cysteine 626 and histidine 699 each act as for helper component proteinase activity in the active site. Residues 1229–1381 (DIAHSEHLDF…TQQPVKLIVE (153 aa)) form the Helicase ATP-binding domain. 1242-1249 (GAVGSGKS) serves as a coordination point for ATP. A DECH box motif is present at residues 1331–1334 (DECH). One can recognise a Helicase C-terminal domain in the interval 1400–1559 (DVVQFGSNVL…NLPVMTGGVS (160 aa)). A Nuclear localization signal motif is present at residues 1884-1892 (RKKGKGKGT). At tyrosine 1907 the chain carries O-(5'-phospho-RNA)-tyrosine. Residues 1949-1964 (KMVENDDIEMQALGSN) are interaction with host EIF4E. Positions 2032–2250 (AKSLMRGLRD…VLWGPLKLKD (219 aa)) constitute a Peptidase C4 domain. Catalysis depends on for nuclear inclusion protein A activity residues histidine 2077, aspartate 2112, and cysteine 2182. Residues 2519–2643 (WVYCDADGSQ…AVNPEKESIL (125 aa)) enclose the RdRp catalytic domain. The tract at residues 2798 to 2841 (NDTIDAGGSNKKDAKPEQGSIQPNPNKGKDKDVNAGTSGTHTVP) is disordered. Threonine 3046 carries the post-translational modification Phosphothreonine.

This sequence belongs to the potyviridae genome polyprotein family. In terms of assembly, interacts with host eIF4E protein (via cap-binding region); this interaction mediates the translation of the VPg-viral RNA conjugates. Part of a complex that comprises VPg, RNA, host EIF4E and EIF4G; this interaction mediates the translation of the VPg-viral RNA conjugates. Interaction is possible in susceptible hosts but impaired in resistant plants: the VPg of strain LYE84 interacts with tomato eIF4E1 and eIF4E2 as well as with the Capsicum annuum eIF4E1 susceptible allele pvr2(+) but not with resistant alleles pvr2(1), pvr2(2), pvr2(3), pvr2(4), pvr2(5), pvr2(6), pvr2(7), pvr2(8) and pvr2(9), the VPg of strain SON41 interacts with C.annuum eIF4E1 susceptible alleles pvr2(+), pvr2(1), pvr2(2), pvr2(3) and pvr2(4) but not with resistant alleles pvr2(5), pvr2(6), pvr2(7), pvr2(8) and pvr2(9), the VPg of strain LYE90 interacts only with tomato eIF4E1. Post-translationally, VPg is uridylylated by the polymerase and is covalently attached to the 5'-end of the genomic RNA. This uridylylated form acts as a nucleotide-peptide primer for the polymerase. Potyviral RNA is expressed as two polyproteins which undergo post-translational proteolytic processing. Genome polyprotein is processed by NIa-pro, P1 and HC-pro proteinases resulting in the production of at least ten individual proteins. P3N-PIPO polyprotein is cleaved by P1 and HC-pro proteinases resulting in the production of three individual proteins. The P1 proteinase and the HC-pro cleave only their respective C-termini autocatalytically. 6K1 is essential for proper proteolytic separation of P3 from CI.

It localises to the host cytoplasmic vesicle. The protein localises to the host nucleus. Its subcellular location is the virion. It catalyses the reaction RNA(n) + a ribonucleoside 5'-triphosphate = RNA(n+1) + diphosphate. It carries out the reaction Hydrolyzes glutaminyl bonds, and activity is further restricted by preferences for the amino acids in P6 - P1' that vary with the species of potyvirus, e.g. Glu-Xaa-Xaa-Tyr-Xaa-Gln-|-(Ser or Gly) for the enzyme from tobacco etch virus. The natural substrate is the viral polyprotein, but other proteins and oligopeptides containing the appropriate consensus sequence are also cleaved.. The enzyme catalyses Hydrolyzes a Gly-|-Gly bond at its own C-terminus, commonly in the sequence -Tyr-Xaa-Val-Gly-|-Gly, in the processing of the potyviral polyprotein.. In terms of biological role, required for aphid transmission and also has proteolytic activity. Only cleaves a Gly-Gly dipeptide at its own C-terminus. Interacts with virions and aphid stylets. Acts as a suppressor of RNA-mediated gene silencing, also known as post-transcriptional gene silencing (PTGS), a mechanism of plant viral defense that limits the accumulation of viral RNAs. May have RNA-binding activity. Functionally, has helicase activity. It may be involved in replication. Indispensable for virus replication. Reduces the abundance of host transcripts related to jasmonic acid biosynthesis therefore altering the host defenses. In order to increase its own stability, decreases host protein degradation pathways. Its function is as follows. Indispensable for virus replication. In terms of biological role, mediates the cap-independent, EIF4E-dependent translation of viral genomic RNAs. Binds to the cap-binding site of host EIF4E and thus interferes with the host EIF4E-dependent mRNA export and translation. VPg-RNA directly binds EIF4E and is a template for transcription. Also forms trimeric complexes with EIF4E-EIF4G, which are templates for translation. Functionally, has RNA-binding and proteolytic activities. An RNA-dependent RNA polymerase that plays an essential role in the virus replication. Its function is as follows. Involved in aphid transmission, cell-to-cell and systemis movement, encapsidation of the viral RNA and in the regulation of viral RNA amplification. This Potato virus Y (strain N) (PVY) protein is Genome polyprotein.